We begin with the raw amino-acid sequence, 284 residues long: Acetylglutamate kinase (284 aa).

Substrate contacts are provided by residues 66 to 67, R88, and N179; that span reads GG.

This sequence belongs to the acetylglutamate kinase family. ArgB subfamily.

Its subcellular location is the cytoplasm. It catalyses the reaction N-acetyl-L-glutamate + ATP = N-acetyl-L-glutamyl 5-phosphate + ADP. Its pathway is amino-acid biosynthesis; L-arginine biosynthesis; N(2)-acetyl-L-ornithine from L-glutamate: step 2/4. Functionally, catalyzes the ATP-dependent phosphorylation of N-acetyl-L-glutamate. The sequence is that of Acetylglutamate kinase from Actinobacillus pleuropneumoniae serotype 7 (strain AP76).